We begin with the raw amino-acid sequence, 222 residues long: Thiamine-phosphate synthase (222 aa).

4-amino-2-methyl-5-(diphosphooxymethyl)pyrimidine contacts are provided by residues 42-46 (QYRDK) and asparagine 74. Mg(2+) contacts are provided by aspartate 75 and aspartate 94. A 4-amino-2-methyl-5-(diphosphooxymethyl)pyrimidine-binding site is contributed by threonine 113. 140–142 (SAT) provides a ligand contact to 2-[(2R,5Z)-2-carboxy-4-methylthiazol-5(2H)-ylidene]ethyl phosphate. Residue lysine 143 coordinates 4-amino-2-methyl-5-(diphosphooxymethyl)pyrimidine. Residue glycine 169 participates in 2-[(2R,5Z)-2-carboxy-4-methylthiazol-5(2H)-ylidene]ethyl phosphate binding.

It belongs to the thiamine-phosphate synthase family. Mg(2+) is required as a cofactor.

It catalyses the reaction 2-[(2R,5Z)-2-carboxy-4-methylthiazol-5(2H)-ylidene]ethyl phosphate + 4-amino-2-methyl-5-(diphosphooxymethyl)pyrimidine + 2 H(+) = thiamine phosphate + CO2 + diphosphate. The enzyme catalyses 2-(2-carboxy-4-methylthiazol-5-yl)ethyl phosphate + 4-amino-2-methyl-5-(diphosphooxymethyl)pyrimidine + 2 H(+) = thiamine phosphate + CO2 + diphosphate. The catalysed reaction is 4-methyl-5-(2-phosphooxyethyl)-thiazole + 4-amino-2-methyl-5-(diphosphooxymethyl)pyrimidine + H(+) = thiamine phosphate + diphosphate. It participates in cofactor biosynthesis; thiamine diphosphate biosynthesis; thiamine phosphate from 4-amino-2-methyl-5-diphosphomethylpyrimidine and 4-methyl-5-(2-phosphoethyl)-thiazole: step 1/1. Functionally, condenses 4-methyl-5-(beta-hydroxyethyl)thiazole monophosphate (THZ-P) and 2-methyl-4-amino-5-hydroxymethyl pyrimidine pyrophosphate (HMP-PP) to form thiamine monophosphate (TMP). The protein is Thiamine-phosphate synthase of Marinobacter nauticus (strain ATCC 700491 / DSM 11845 / VT8) (Marinobacter aquaeolei).